The primary structure comprises 295 residues: MKIQTDAANVLQRASAQLKSGLLKEKPLWYDIIAKYPPTSTNDLIKKSHVYEGKSDPRNNSIIYKYPNSNNKNNNVLFKTRPSNKELKSKNHNIHKLPKLKFIEDSLRKIFYQQHPWELSRPKNLIDNGNGNNNEKCDWSHMLQLHKPLDGESVVQRTLWLLKNNTTKGLTMVEAYDKARFEFYKLRMSEEMESHVAKEESTMYGSVFTSTTVNWNLSKEQEYINDWTIIAKERTQVIEANMNKSSAPIGSVVEEEKSQSSLFEDLLSNDNLQSEPEVEQSGQQQQQEQPKQETN.

The disordered stretch occupies residues 249-295; the sequence is IGSVVEEEKSQSSLFEDLLSNDNLQSEPEVEQSGQQQQQEQPKQETN. The segment covering 273 to 289 has biased composition (low complexity); sequence QSEPEVEQSGQQQQQEQ.

Belongs to the mitochondrion-specific ribosomal protein mS23 family. In terms of assembly, component of the mitochondrial small ribosomal subunit (mt-SSU).

Its subcellular location is the mitochondrion. Functionally, component of the mitochondrial ribosome (mitoribosome), a dedicated translation machinery responsible for the synthesis of mitochondrial genome-encoded proteins, including at least some of the essential transmembrane subunits of the mitochondrial respiratory chain. The mitoribosomes are attached to the mitochondrial inner membrane and translation products are cotranslationally integrated into the membrane. This Candida albicans (strain SC5314 / ATCC MYA-2876) (Yeast) protein is Small ribosomal subunit protein mS23 (RSM25).